The sequence spans 241 residues: 1-(5-phosphoribosyl)-5-[(5-phosphoribosylamino)methylideneamino] imidazole-4-carboxamide isomerase (241 aa).

Catalysis depends on D8, which acts as the Proton acceptor. Catalysis depends on D130, which acts as the Proton donor.

Belongs to the HisA/HisF family.

It localises to the cytoplasm. The enzyme catalyses 1-(5-phospho-beta-D-ribosyl)-5-[(5-phospho-beta-D-ribosylamino)methylideneamino]imidazole-4-carboxamide = 5-[(5-phospho-1-deoxy-D-ribulos-1-ylimino)methylamino]-1-(5-phospho-beta-D-ribosyl)imidazole-4-carboxamide. The protein operates within amino-acid biosynthesis; L-histidine biosynthesis; L-histidine from 5-phospho-alpha-D-ribose 1-diphosphate: step 4/9. The polypeptide is 1-(5-phosphoribosyl)-5-[(5-phosphoribosylamino)methylideneamino] imidazole-4-carboxamide isomerase (Leptospira borgpetersenii serovar Hardjo-bovis (strain L550)).